The sequence spans 444 residues: Chromosome partition protein MukF (444 aa).

Positions 211–239 are leucine-zipper; it reads LDETSGNLRELQDTLNAAGDKLQAQLLRI.

The protein belongs to the MukF family. Interacts, and probably forms a ternary complex, with MukE and MukB via its C-terminal region. The complex formation is stimulated by calcium or magnesium. It is required for an interaction between MukE and MukB.

The protein localises to the cytoplasm. It localises to the nucleoid. In terms of biological role, involved in chromosome condensation, segregation and cell cycle progression. May participate in facilitating chromosome segregation by condensation DNA from both sides of a centrally located replisome during cell division. Not required for mini-F plasmid partitioning. Probably acts via its interaction with MukB and MukE. Overexpression results in anucleate cells. It has a calcium binding activity. This is Chromosome partition protein MukF from Actinobacillus succinogenes (strain ATCC 55618 / DSM 22257 / CCUG 43843 / 130Z).